The primary structure comprises 953 residues: Coatomer subunit beta-1 (953 aa).

HEAT repeat units lie at residues 49 to 87 (ETLP…RDVA), 93 to 127 (PEMI…LNEP), 128 to 165 (ELLE…LPHG), 314 to 351 (DVMV…PRNV), and 393 to 430 (EVAG…TNPK).

In terms of assembly, oligomeric complex that consists of at least the alpha, beta, beta', gamma, delta, epsilon and zeta subunits.

Its subcellular location is the cytoplasm. It localises to the golgi apparatus membrane. The protein localises to the cytoplasmic vesicle. The protein resides in the COPI-coated vesicle membrane. In terms of biological role, the coatomer is a cytosolic protein complex that binds to dilysine motifs and reversibly associates with Golgi non-clathrin-coated vesicles, which further mediate biosynthetic protein transport from the ER, via the Golgi up to the trans Golgi network. Coatomer complex is required for budding from Golgi membranes, and is essential for the retrograde Golgi-to-ER transport of dilysine-tagged proteins. In Oryza sativa subsp. japonica (Rice), this protein is Coatomer subunit beta-1.